The chain runs to 227 residues: Cytochrome c oxidase subunit 2 (227 aa).

The Mitochondrial intermembrane portion of the chain corresponds to Met-1 to Ser-14. A helical transmembrane segment spans residues Pro-15–Met-45. Residues Leu-46 to Gln-59 are Mitochondrial matrix-facing. A helical membrane pass occupies residues Glu-60 to Met-87. The Mitochondrial intermembrane portion of the chain corresponds to Asp-88–Val-227. Positions 161, 196, 198, 200, 204, and 207 each coordinate Cu cation. Glu-198 contributes to the Mg(2+) binding site. Position 218 is a phosphotyrosine (Tyr-218).

It belongs to the cytochrome c oxidase subunit 2 family. As to quaternary structure, component of the cytochrome c oxidase (complex IV, CIV), a multisubunit enzyme composed of 14 subunits. The complex is composed of a catalytic core of 3 subunits MT-CO1, MT-CO2 and MT-CO3, encoded in the mitochondrial DNA, and 11 supernumerary subunits COX4I, COX5A, COX5B, COX6A, COX6B, COX6C, COX7A, COX7B, COX7C, COX8 and NDUFA4, which are encoded in the nuclear genome. The complex exists as a monomer or a dimer and forms supercomplexes (SCs) in the inner mitochondrial membrane with NADH-ubiquinone oxidoreductase (complex I, CI) and ubiquinol-cytochrome c oxidoreductase (cytochrome b-c1 complex, complex III, CIII), resulting in different assemblies (supercomplex SCI(1)III(2)IV(1) and megacomplex MCI(2)III(2)IV(2)). Found in a complex with TMEM177, COA6, COX18, COX20, SCO1 and SCO2. Interacts with TMEM177 in a COX20-dependent manner. Interacts with COX20. Interacts with COX16. The cofactor is Cu cation.

The protein resides in the mitochondrion inner membrane. The catalysed reaction is 4 Fe(II)-[cytochrome c] + O2 + 8 H(+)(in) = 4 Fe(III)-[cytochrome c] + 2 H2O + 4 H(+)(out). In terms of biological role, component of the cytochrome c oxidase, the last enzyme in the mitochondrial electron transport chain which drives oxidative phosphorylation. The respiratory chain contains 3 multisubunit complexes succinate dehydrogenase (complex II, CII), ubiquinol-cytochrome c oxidoreductase (cytochrome b-c1 complex, complex III, CIII) and cytochrome c oxidase (complex IV, CIV), that cooperate to transfer electrons derived from NADH and succinate to molecular oxygen, creating an electrochemical gradient over the inner membrane that drives transmembrane transport and the ATP synthase. Cytochrome c oxidase is the component of the respiratory chain that catalyzes the reduction of oxygen to water. Electrons originating from reduced cytochrome c in the intermembrane space (IMS) are transferred via the dinuclear copper A center (CU(A)) of subunit 2 and heme A of subunit 1 to the active site in subunit 1, a binuclear center (BNC) formed by heme A3 and copper B (CU(B)). The BNC reduces molecular oxygen to 2 water molecules using 4 electrons from cytochrome c in the IMS and 4 protons from the mitochondrial matrix. The protein is Cytochrome c oxidase subunit 2 (MT-CO2) of Canis lupus familiaris (Dog).